A 536-amino-acid chain; its full sequence is REST corepressor 2 (536 aa).

Residues 1–44 are disordered; the sequence is MERSGSGVLSRSRAKTVTNGNSQHSEEESSDEEHPNDSMIRVGG. Positions 24-36 are enriched in basic and acidic residues; that stretch reads HSEEESSDEEHPN. The ELM2 domain occupies 38-123; sequence SMIRVGGDYQ…KSLADLANFT (86 aa). In terms of domain architecture, SANT 1 spans 124–175; it reads PFPDEWTVEDKVLFEQAFSFHGKSFHRIQQMLPDKMITSLVKYYYSWKKTRT. The tract at residues 179–264 is disordered; the sequence is VMDRQARKLL…RARRRPPKGM (86 aa). Over residues 197-211 the composition is skewed to acidic residues; sequence NDEIEEGDPGSDSDF. The span at 249-262 shows a compositional bias: basic residues; the sequence is YRHHPLRARRRPPK. Residues 283 to 315 adopt a coiled-coil conformation; sequence VTIRQLDTQLVSLKRQVQKIKQTNSVLRNNLGD. In terms of domain architecture, SANT 2 spans 328–379; the sequence is KINSRWTTEEQLLAVQAVRRYGKDFAAIADVIGNKTVAQVSSFFVSYRRRFN. Residues 389-536 are disordered; the sequence is AEQEVQGSSG…GLKVESPQSH (148 aa). Polar residues predominate over residues 391 to 406; that stretch reads QEVQGSSGRTVNTELN. The segment covering 422–449 has biased composition (low complexity); sequence SPPHSDSPLPSSEGSASGNHSSAQSSPP. A compositionally biased stretch (pro residues) spans 450-476; it reads LTQPPPLLRPAPPSAPPSLLRQPPPLQ.

This sequence belongs to the CoREST family.

The protein resides in the nucleus. Functionally, may act as a component of a corepressor complex that represses transcription. This is REST corepressor 2 (rcor2) from Danio rerio (Zebrafish).